The following is an 820-amino-acid chain: MAGELADKKDRDASPSKEERKRSRTPDRERDRDRDRKSSPSKDRKRHRSRDRRRGGSRSRSRSRSKSAERERRHKERERDKERDRNKKDRDRDKDGHRRDKDRKRSSLSPGRGKDFKSRKDRDSKKDEEDEHGDKKPKAQPLSLEELLAKKKAEEEAEAKPKFLSKAEREAEALKRRQQEVEERQRMLEEERKKRKQFQDLGRKMLEDPQERERRERRERMERETNGNEDEEGRQKIREEKDKSKELHAIKERYLGGIKKRRRTRHLNDRKFVFEWDASEDTSIDYNPLYKERHQVQLLGRGFIAGIDLKQQKREQSRFYGDLMEKRRTLEEKEQEEARFRKLRKKEAKQRWDDRHWSQKKLDEMTDRDWRIFREDYSITTKGGKIPNPIRSWKDSSLPPHILEVIDKCGYKEPTPIQRQAIPIGLQNRDIIGVAETGSGKTAAFLIPLLVWITTLPKIDRIEESDQGPYAIILAPTRELAQQIEEETIKFGKPLGIRTVAVIGGISREDQGFRLRMGCEIVIATPGRLIDVLENRYLVPSRCTYVVLDEADRMIDMGFEPDVQKILEHMPVSNQKPDTDEAEDPEKMLANFESGKHKYRQTVMFTATMPPAVERLARSYLRRPAVVYIGSAGKPHERVEQKVFLMSESEKRKKLLAILEQGFDPPIIIFVNQKKGCDVLAKSLEKMGYNACTLHGGKGQEQREFALSNLKAGAKDILVATDVAGRGIDIQDVSMVVNYDMAKNIEDYIHRIGRTGRAGKSGVAITFLTKEDSAVFYELKQAILESPVSSCPPELANHPDAQHKPGTILTKKRREETIFA.

The segment covering 1-42 has biased composition (basic and acidic residues); sequence MAGELADKKDRDASPSKEERKRSRTPDRERDRDRDRKSSPSK. The disordered stretch occupies residues 1–244; the sequence is MAGELADKKD…QKIREEKDKS (244 aa). S14 and S16 each carry phosphoserine. Residues 43–65 are compositionally biased toward basic residues; that stretch reads DRKRHRSRDRRRGGSRSRSRSRS. A compositionally biased stretch (basic and acidic residues) spans 66-105; that stretch reads KSAERERRHKERERDKERDRNKKDRDRDKDGHRRDKDRKR. 2 positions are modified to phosphoserine: S107 and S109. Basic and acidic residues-rich tracts occupy residues 112-137, 147-226, and 233-244; these read RGKD…DKKP, LLAK…RETN, and GRQKIREEKDKS. The Q motif motif lies at 391 to 419; the sequence is RSWKDSSLPPHILEVIDKCGYKEPTPIQR. A Helicase ATP-binding domain is found at 422-627; it reads IPIGLQNRDI…RSYLRRPAVV (206 aa). Residue 435 to 442 coordinates ATP; that stretch reads AETGSGKT. The DEAD box signature appears at 549–552; the sequence is DEAD. The region spanning 651 to 799 is the Helicase C-terminal domain; it reads KRKKLLAILE…SCPPELANHP (149 aa). Residues K686 and K811 each participate in a glycyl lysine isopeptide (Lys-Gly) (interchain with G-Cter in SUMO2) cross-link.

The protein belongs to the DEAD box helicase family. DDX23/PRP28 subfamily. The phosphorylated form (by SRPK2) is a component of the U4/U6-U5 tri-snRNP complex composed of the U4, U6 and U5 snRNAs and at least PRPF3, PRPF4, PRPF6, PRPF8, PRPF31, SNRNP200, TXNL4A, WDR57, SNRNP40, DDX23, CD2BP2, PPIH, SNU13, EFTUD2, SART1 and USP39. Identified in the spliceosome C complex. Interacts with ERBB4. Interacts with ERCC6. In terms of processing, in vitro phosphorylated by CLK1 and U1 snRNP-associated protein kinase. Phosphorylated by SRPK2 and this phosphorylation is required for its association with the tri-snRNP (U4/U6-U5 tri-small nuclear ribonucleoproteins) and subsequent spliceosomal B complex formation. May be phosphorylated by SRPK2 on Ser residues in the SR domain; the phosphorylation is required for the removal of inappropriate R-loops during transcription.

The protein localises to the nucleus. Its subcellular location is the chromosome. The enzyme catalyses ATP + H2O = ADP + phosphate + H(+). Functionally, involved in pre-mRNA splicing and its phosphorylated form (by SRPK2) is required for spliceosomal B complex formation. Independently of its spliceosome formation function, required for the suppression of incorrect R-loops formed during transcription; R-loops are composed of a DNA:RNA hybrid and the associated non-template single-stranded DNA. The protein is Probable ATP-dependent RNA helicase DDX23 of Pongo abelii (Sumatran orangutan).